A 286-amino-acid chain; its full sequence is Shikimate dehydrogenase (NADP(+)) (286 aa).

Residues 20-22 (SLS) and Ser67 contribute to the shikimate site. The active-site Proton acceptor is the Lys71. Shikimate contacts are provided by Asn92 and Asp107. NADP(+)-binding positions include 131 to 135 (GGGGA) and Ala230. Residue Tyr232 participates in shikimate binding. Gly253 is a binding site for NADP(+).

Belongs to the shikimate dehydrogenase family. In terms of assembly, homodimer.

It catalyses the reaction shikimate + NADP(+) = 3-dehydroshikimate + NADPH + H(+). It functions in the pathway metabolic intermediate biosynthesis; chorismate biosynthesis; chorismate from D-erythrose 4-phosphate and phosphoenolpyruvate: step 4/7. Its function is as follows. Involved in the biosynthesis of the chorismate, which leads to the biosynthesis of aromatic amino acids. Catalyzes the reversible NADPH linked reduction of 3-dehydroshikimate (DHSA) to yield shikimate (SA). In Lactococcus lactis subsp. lactis (strain IL1403) (Streptococcus lactis), this protein is Shikimate dehydrogenase (NADP(+)).